Here is a 250-residue protein sequence, read N- to C-terminus: Glycerol-1-phosphate phosphohydrolase 1 (250 aa).

Asp-18 acts as the Nucleophile in catalysis. Positions 18 and 20 each coordinate Mg(2+). The active-site Proton donor is Asp-20. Lys-64 is covalently cross-linked (Glycyl lysine isopeptide (Lys-Gly) (interchain with G-Cter in SUMO); alternate). Lys-64 is covalently cross-linked (Glycyl lysine isopeptide (Lys-Gly) (interchain with G-Cter in ubiquitin); alternate). The residue at position 90 (Ser-90) is a Phosphoserine. A Glycyl lysine isopeptide (Lys-Gly) (interchain with G-Cter in ubiquitin) cross-link involves residue Lys-144. Asp-179 contributes to the Mg(2+) binding site.

It belongs to the HAD-like hydrolase superfamily. DOG/GPP family. Monomer. Mg(2+) is required as a cofactor.

It is found in the cytoplasm. The protein resides in the nucleus. The enzyme catalyses sn-glycerol 1-phosphate + H2O = glycerol + phosphate. It carries out the reaction sn-glycerol 3-phosphate + H2O = glycerol + phosphate. In terms of biological role, major isoform of glycerol-1-phosphate phosphohydrolase involved in glycerol biosynthesis. Plays a role in osmoadaptation and required for adaptation to anaerobic conditions. The polypeptide is Glycerol-1-phosphate phosphohydrolase 1 (Saccharomyces cerevisiae (strain ATCC 204508 / S288c) (Baker's yeast)).